Consider the following 361-residue polypeptide: Chorismate synthase (361 aa).

The disordered stretch occupies residues 37-59; the sequence is TEADLQHDLDRRRPGTSRYTTQR. A compositionally biased stretch (basic and acidic residues) spans 40–49; that stretch reads DLQHDLDRRR. Residues Arg-48 and Arg-54 each coordinate NADP(+). FMN-binding positions include 125–127, 238–239, Gly-278, 293–297, and Arg-319; these read RSS, NA, and KPTSS.

It belongs to the chorismate synthase family. Homotetramer. Requires FMNH2 as cofactor.

The catalysed reaction is 5-O-(1-carboxyvinyl)-3-phosphoshikimate = chorismate + phosphate. The protein operates within metabolic intermediate biosynthesis; chorismate biosynthesis; chorismate from D-erythrose 4-phosphate and phosphoenolpyruvate: step 7/7. Its function is as follows. Catalyzes the anti-1,4-elimination of the C-3 phosphate and the C-6 proR hydrogen from 5-enolpyruvylshikimate-3-phosphate (EPSP) to yield chorismate, which is the branch point compound that serves as the starting substrate for the three terminal pathways of aromatic amino acid biosynthesis. This reaction introduces a second double bond into the aromatic ring system. The protein is Chorismate synthase of Serratia proteamaculans (strain 568).